The sequence spans 653 residues: 4-hydroxy-2,2'-bipyrrole-5-methanol synthase PigH (653 aa).

One can recognise a Carrier domain in the interval 7-84 (ETYETLKQSV…DALDGILQRE (78 aa)). Serine 45 carries the post-translational modification O-(pantetheine 4'-phosphoryl)serine. 354–355 (GY) contributes to the pyridoxal 5'-phosphate binding site. Residue histidine 379 coordinates substrate. Pyridoxal 5'-phosphate is bound by residues serine 426, histidine 454, and threonine 482. At lysine 485 the chain carries N6-(pyridoxal phosphate)lysine. Residues 512 to 532 (VFAATIPAPVAAGVIASIDVM) form a helical membrane-spanning segment.

Requires pyridoxal 5'-phosphate as cofactor.

It localises to the membrane. It participates in antibiotic biosynthesis; prodigiosin biosynthesis. Involved in the biosynthesis of 4-methoxy-2,2'-bipyrrole-5-carbaldehyde (MBC), one of the terminal products involved in the biosynthesis of the red antibiotic prodigiosin (Pig). Carrier of the L-malonyl group (malonyl-S-PigH), which is decarboxylated by PigJ to yield a C2 carbanion acetyl-S-PigH. Then the pyrrolyl group of pyrrolyl-S-cysteinyl PigJ intermediate is captured by the C2 carbanion acetyl-S-PigH to yield the pyrrolyl-beta-ketoacyl-S-PigH. In the last step, PigH catalyzes the decarboxylative condensation between the pyrrolyl-beta-ketoacyl (pyrrolyl-beta-ketoacyl-S-PigH) and L-serine to yield 4-hydroxy-2,2'-bipyrrole-5-methanol (HBM). The polypeptide is 4-hydroxy-2,2'-bipyrrole-5-methanol synthase PigH (Serratia sp. (strain ATCC 39006) (Prodigiosinella confusarubida)).